Here is a 584-residue protein sequence, read N- to C-terminus: Pectinesterase 3 (584 aa).

The first 50 residues, Met1–Gly50, serve as a signal peptide directing secretion. Positions Val51–Gln266 are excised as a propeptide. Asn108, Asn129, and Asn226 each carry an N-linked (GlcNAc...) asparagine glycan. 2 residues coordinate substrate: Thr348 and Gln378. Residue Asp401 is the Proton donor of the active site. A disulfide bridge links Cys415 with Cys435. Catalysis depends on Asp422, which acts as the Nucleophile. Substrate-binding residues include Arg490 and Trp492.

It in the N-terminal section; belongs to the PMEI family. The protein in the C-terminal section; belongs to the pectinesterase family. In terms of tissue distribution, in the peel, expression is localized to the region of the flavedo close to the oil glands, and to the innermost layer of the albedo. In the lamella, expression is localized to the cell layers opposing the fruit tissue, and to the parenchyma surrounding the vascular tissue. In the fruit vesicles, expression is restricted to the peripheral cell layers and stalk cells. High levels of expression are detected in the core matrix.

It localises to the secreted. The protein localises to the cell wall. It catalyses the reaction [(1-&gt;4)-alpha-D-galacturonosyl methyl ester](n) + n H2O = [(1-&gt;4)-alpha-D-galacturonosyl](n) + n methanol + n H(+). It participates in glycan metabolism; pectin degradation; 2-dehydro-3-deoxy-D-gluconate from pectin: step 1/5. In terms of biological role, acts in the modification of cell walls via demethylesterification of cell wall pectin. This Citrus sinensis (Sweet orange) protein is Pectinesterase 3.